The chain runs to 423 residues: Deoxyguanosinetriphosphate triphosphohydrolase-like protein (423 aa).

One can recognise an HD domain in the interval Arg-66–Ser-216.

Belongs to the dGTPase family. Type 2 subfamily.

This Corynebacterium diphtheriae (strain ATCC 700971 / NCTC 13129 / Biotype gravis) protein is Deoxyguanosinetriphosphate triphosphohydrolase-like protein.